The following is a 474-amino-acid chain: Bifunctional protein GlmU (474 aa).

Residues 1–232 (MSALDVIIMA…ALQVAGVNSP (232 aa)) are pyrophosphorylase. UDP-N-acetyl-alpha-D-glucosamine is bound by residues Lys23, Gln78, 83–84 (GT), 105–107 (SGD), Gly142, Glu157, and Asn230. Mg(2+) is bound at residue Asp107. Asn230 provides a ligand contact to Mg(2+). A linker region spans residues 233-253 (LQLAELERAHQLAQARALMEQ). The interval 254–474 (GVRLADPARF…WQRPAKLPKA (221 aa)) is N-acetyltransferase. The UDP-N-acetyl-alpha-D-glucosamine site is built by Arg349 and Lys367. The active-site Proton acceptor is His379. The UDP-N-acetyl-alpha-D-glucosamine site is built by Tyr382 and Asn393. Residues Ala396, 402–403 (NY), Ser421, Gly439, and Arg456 contribute to the acetyl-CoA site. The segment at 454 to 474 (VARGKQVTKENWQRPAKLPKA) is disordered.

It in the N-terminal section; belongs to the N-acetylglucosamine-1-phosphate uridyltransferase family. This sequence in the C-terminal section; belongs to the transferase hexapeptide repeat family. In terms of assembly, homotrimer. Mg(2+) is required as a cofactor.

The protein localises to the cytoplasm. The catalysed reaction is alpha-D-glucosamine 1-phosphate + acetyl-CoA = N-acetyl-alpha-D-glucosamine 1-phosphate + CoA + H(+). The enzyme catalyses N-acetyl-alpha-D-glucosamine 1-phosphate + UTP + H(+) = UDP-N-acetyl-alpha-D-glucosamine + diphosphate. It participates in nucleotide-sugar biosynthesis; UDP-N-acetyl-alpha-D-glucosamine biosynthesis; N-acetyl-alpha-D-glucosamine 1-phosphate from alpha-D-glucosamine 6-phosphate (route II): step 2/2. It functions in the pathway nucleotide-sugar biosynthesis; UDP-N-acetyl-alpha-D-glucosamine biosynthesis; UDP-N-acetyl-alpha-D-glucosamine from N-acetyl-alpha-D-glucosamine 1-phosphate: step 1/1. The protein operates within bacterial outer membrane biogenesis; LPS lipid A biosynthesis. Functionally, catalyzes the last two sequential reactions in the de novo biosynthetic pathway for UDP-N-acetylglucosamine (UDP-GlcNAc). The C-terminal domain catalyzes the transfer of acetyl group from acetyl coenzyme A to glucosamine-1-phosphate (GlcN-1-P) to produce N-acetylglucosamine-1-phosphate (GlcNAc-1-P), which is converted into UDP-GlcNAc by the transfer of uridine 5-monophosphate (from uridine 5-triphosphate), a reaction catalyzed by the N-terminal domain. The protein is Bifunctional protein GlmU of Paracidovorax citrulli (strain AAC00-1) (Acidovorax citrulli).